A 384-amino-acid chain; its full sequence is Putative ankyrin repeat protein L72 (384 aa).

ANK repeat units follow at residues 88–117 (ADMC…NIKN), 119–146 (GNLL…KEFS), 171–200 (DHNV…ILSV), 202–231 (DDSL…DIES), 233–261 (NNYC…NPNN), 298–324 (ILYQ…AGIK), and 325–357 (PTNS…DINV).

The chain is Putative ankyrin repeat protein L72 from Acanthamoeba polyphaga (Amoeba).